Consider the following 433-residue polypeptide: Gamma-glutamyl phosphate reductase (433 aa).

Belongs to the gamma-glutamyl phosphate reductase family.

The protein localises to the cytoplasm. It catalyses the reaction L-glutamate 5-semialdehyde + phosphate + NADP(+) = L-glutamyl 5-phosphate + NADPH + H(+). It participates in amino-acid biosynthesis; L-proline biosynthesis; L-glutamate 5-semialdehyde from L-glutamate: step 2/2. In terms of biological role, catalyzes the NADPH-dependent reduction of L-glutamate 5-phosphate into L-glutamate 5-semialdehyde and phosphate. The product spontaneously undergoes cyclization to form 1-pyrroline-5-carboxylate. The polypeptide is Gamma-glutamyl phosphate reductase (Rhodopseudomonas palustris (strain BisB18)).